The primary structure comprises 26 residues: Guentherin (26 aa).

In terms of tissue distribution, expressed by the skin glands.

The protein localises to the secreted. Functionally, antimicrobial peptide. Active against the Gram-positive bacteria S.aureus FDA209P (MIC=35.5 ug/ml) and B.subtilis ATCC 6633 (MIC&gt;64 ug/ml), but not active against the Gram-negative bacterium E.coli or the fungus C.albicans. This is Guentherin from Sylvirana guentheri (Gunther's frog).